Reading from the N-terminus, the 1149-residue chain is Guanine nucleotide exchange factor DBS (1149 aa).

Residues 52-224 (MATASDEIMH…DLGGTLDYCH (173 aa)) form the CRAL-TRIO domain. One copy of the Spectrin repeat lies at 355–454 (HFEQGFREVK…SEVTRRRDLL (100 aa)). 4 positions are modified to phosphoserine: S457, S462, S471, and S480. Positions 503–528 (LETGAENKIQELNKIYKEYECILNQD) form a coiled coil. Residues 555 to 627 (KKLAAKQTRP…RTSSTGEEEE (73 aa)) form a disordered region. A compositionally biased stretch (low complexity) spans 583-594 (PGSWRSSENSSS). Basic and acidic residues predominate over residues 607–616 (AKSEMSEPRQ). S621 bears the Phosphoserine mark. Position 622 is a phosphothreonine (T622). A DH domain is found at 632–812 (LRRHVMNELL…LGILKAVNDS (181 aa)). The PH domain occupies 830–946 (KLLMQGSFSV…WVNEIRKVLT (117 aa)). The tract at residues 956-1033 (SQHRALEQSH…EAPEEDGGWS (78 aa)) is disordered. The span at 964-978 (SHSLPLPTPASTSPT) shows a compositional bias: low complexity. Residues S1033, S1034, S1041, and S1042 each carry the phosphoserine modification. The SH3 domain occupies 1055 to 1116 (LVPGKYTVLM…PASSLATLLG (62 aa)).

This sequence belongs to the MCF2 family. As to quaternary structure, interacts with GTP-bound RAC1. Interacts with CDC42. Interacts with RHOA. Interacts with CCPG1, which results in specific inhibition of its exchange activity toward RHOA, but does not affect its activity on CDC42. Mainly phosphorylated on serine. In terms of tissue distribution, highest expression in the brain, where it is found in neurons and alpha-tanycytes (at protein level). Detected in brain, and at lower levels in the heart.

The protein localises to the cytoplasm. The protein resides in the cell membrane. In terms of biological role, guanine nucleotide exchange factor that catalyzes guanine nucleotide exchange on RHOA and CDC42, and thereby contributes to the regulation of RHOA and CDC42 signaling pathways. Seems to lack activity with RAC1. Becomes activated and highly tumorigenic by truncation of the N-terminus. The chain is Guanine nucleotide exchange factor DBS (Mcf2l) from Rattus norvegicus (Rat).